The sequence spans 602 residues: Multicopper oxidase aurL2 (602 aa).

The N-terminal stretch at 1–17 is a signal peptide; it reads MLFRFLALLPFVAGAFA. Plastocyanin-like domains lie at 38 to 149 and 160 to 317; these read DIKI…VRDA and IPLL…KYRC. Residues N52 and N80 are each glycosylated (N-linked (GlcNAc...) asparagine). Positions 84, 86, 130, and 132 each coordinate Cu cation. N201, N247, N337, N383, N387, N419, and N424 each carry an N-linked (GlcNAc...) asparagine glycan. The 136-residue stretch at 421-556 folds into the Plastocyanin-like 3 domain; sequence TTPNYTLALE…QVMGMATVWV (136 aa). H469 is a binding site for Cu cation. N-linked (GlcNAc...) asparagine glycosylation is found at N482 and N486.

Belongs to the multicopper oxidase family.

It participates in pigment biosynthesis. Its function is as follows. Multicopper oxidase; part of the gene cluster that mediates the biosynthesis of aurofusarin, a red mycelium pigment which is acting as a mycotoxin. The first step is performed by the polyketide synthase which condenses one acetyl-CoA and 6 malonyl-CoA units to form the first intermediate, the cyclic heptaketide and yellow pigment YWA1. The C2 hydroxyl group in the pyrone ring of YWA1 is probably formed during ring closure by an aldol-type cyclization reaction. The dehydratase aurZ then acts as the first tailoring enzyme in the aurofusarin biosynthetic pathway by converting YWA1 to nor-rubrofusarin. Nor-rubrofusarin is then methylated to rubrofusarin by the O-methyltransferase aurJ. Rubrofusarin is then transported across the plasma membrane by the rubrofusarin-specific pump aurT for further enzymatic processing by the extracellular complex composed of GIP1, aurF, aurO and aurS to yield aurofusarin. The sequence is that of Multicopper oxidase aurL2 (aurL2) from Gibberella zeae (strain ATCC MYA-4620 / CBS 123657 / FGSC 9075 / NRRL 31084 / PH-1) (Wheat head blight fungus).